The primary structure comprises 117 residues: Large ribosomal subunit protein bL20 (117 aa).

Belongs to the bacterial ribosomal protein bL20 family.

Its function is as follows. Binds directly to 23S ribosomal RNA and is necessary for the in vitro assembly process of the 50S ribosomal subunit. It is not involved in the protein synthesizing functions of that subunit. This chain is Large ribosomal subunit protein bL20, found in Leptospira borgpetersenii serovar Hardjo-bovis (strain JB197).